The sequence spans 61 residues: Bacteriocin leucocin-A (61 aa).

The propeptide occupies methionine 1–glycine 24. A disulfide bond links cysteine 33 and cysteine 38.

It belongs to the bacteriocin class IIA/YGNGV family.

It is found in the secreted. Inhibits a wide spectrum of lactic acid bacteria. This chain is Bacteriocin leucocin-A (lcnA), found in Leuconostoc gelidum.